The primary structure comprises 108 residues: Urease subunit beta (108 aa).

This sequence belongs to the urease beta subunit family. Probable heterotrimer of UreA (gamma), UreB (beta) and UreC (alpha) subunits. Three heterotrimers associate to form the active enzyme. The trimeric urease interacts with an accessory complex composed of UreD, UreF and UreG, which is required for the assembly of the nickel containing metallocenter of UreC. The UreE protein may also play a direct role in nickel transfer to the urease apoprotein.

The protein localises to the cytoplasm. It catalyses the reaction urea + 2 H2O + H(+) = hydrogencarbonate + 2 NH4(+). Its pathway is nitrogen metabolism; urea degradation; CO(2) and NH(3) from urea (urease route): step 1/1. The chain is Urease subunit beta from Proteus mirabilis (strain HI4320).